The primary structure comprises 217 residues: Probable glutathione S-transferase DHAR4 (217 aa).

Glutathione is bound by residues Lys8 and Asp19. 2 residues coordinate L-ascorbate: Lys8 and Asp19. The region spanning 10–85 (ASGAPDVLGD…DLIVGIIEEK (76 aa)) is the GST N-terminal domain. The active-site Nucleophile is the Cys20. Positions 20–25 (CPFGQR) match the Glutathione-binding motif. Residues Lys47, Ser75, His164, and Trp211 each coordinate glutathione. The region spanning 86–217 (YPEPSLVTFP…IASWAPKLDV (132 aa)) is the GST C-terminal domain. An L-ascorbate-binding site is contributed by Lys214.

The protein belongs to the GST superfamily. DHAR family. As to quaternary structure, monomer.

The protein resides in the cytoplasm. It localises to the cytosol. It catalyses the reaction RX + glutathione = an S-substituted glutathione + a halide anion + H(+). The catalysed reaction is L-dehydroascorbate + 2 glutathione = glutathione disulfide + L-ascorbate. In terms of biological role, exhibits glutathione-dependent thiol transferase and dehydroascorbate (DHA) reductase activities. The polypeptide is Probable glutathione S-transferase DHAR4 (DHAR4) (Arabidopsis thaliana (Mouse-ear cress)).